A 211-amino-acid chain; its full sequence is Superoxide dismutase [Fe] (211 aa).

4 residues coordinate Fe cation: His-34, His-85, Asp-171, and His-175.

It belongs to the iron/manganese superoxide dismutase family. Fe cation is required as a cofactor.

The catalysed reaction is 2 superoxide + 2 H(+) = H2O2 + O2. Functionally, destroys superoxide anion radicals which are normally produced within the cells and which are toxic to biological systems. The polypeptide is Superoxide dismutase [Fe] (sod) (Acidianus ambivalens (Desulfurolobus ambivalens)).